The primary structure comprises 868 residues: MASPASVAGGGEDSNGCSSLIDPLLVSRTSSIGGAERKAAGGGGGGAKGKHWAAADKGERRAAKECGGEDGRRPLLFRSYRVKGSLLHPYRALIFARLIAVLLFFGWRIRHNNSDIMWFWTMSVAGDVWFGFSWLLNQLPKFNPVKTIPDLTALRQYCDLADGSYRLPGIDVFVTTADPIDEPVLYTMNCVLSILAADYPVDRSACYLSDDSGALILYEALVETAKFATLWVPFCRKHCIEPRSPESYFELEAPSYTGSAQEEFKNDSRIVHLEYDEFKVRLEALPETIRKRSDVYNSMKTDQGAPNATWMANGTQWPGTWIEPIENHRKGHHAGIVKVVLDHPIRGHNLSLKDSTGNNLNFNATDVRIPMLVYVSRGKNPNYDHNKKAGALNAQLRASALLSNAQFIINFDCDHYINNSQALRAAICFMLDQREGDNTAFVQFPQRFDNVDPKDRYGNHNRVFFDGTMLALNGLQGPSYLGTGCMFRRLALYGIDPPHWRQDNITPESSKFGNSILLLESVLEALNQDRFATPSPVNDIFVNELEMVVSASFDKETDWGKGVGYIYDIATEDIVTGFRIHGQGWRSMYCTMEHDAFCGTAPINLTERLHQIVRWSGGSLEMFFSHNNPLIGGRRLQPLQRVSYLNMTIYPVTSLFILLYAISPVMWLIPDEVYIQRPFTRYVVYLLMIILMIHMIGWLEIKWAGITWLDYWRNEQFFMIGSTSAYPTAVLHMVVNLLTKKGIHFRVTSKQTTADTNDKFADLYEMRWVPMLIPTMVVLVANIGAIGVAIGKMAVYMGVWTIAQKRHAIMGLLFNMWVMFLLYPFALAIMGRWAKRPIILVVLLPIIFVIVALVYVATHILLANIIPF.

Residues 36 to 68 (ERKAAGGGGGGAKGKHWAAADKGERRAAKECGG) are disordered. The segment covering 53–68 (AAADKGERRAAKECGG) has biased composition (basic and acidic residues). 2 helical membrane-spanning segments follow: residues 86–106 (LLHP…LFFG) and 116–136 (IMWF…SWLL). Residue Asp211 is part of the active site. Residues Asp412 and Asp414 each coordinate substrate. Residue Asp573 is part of the active site. Helical transmembrane passes span 649–669 (IYPV…MWLI), 686–706 (LLMI…WAGI), 717–737 (FFMI…VVNL), 771–791 (MLIP…VAIG), 809–829 (IMGL…ALAI), and 837–857 (PIIL…VYVA).

The protein belongs to the glycosyltransferase 2 family. Plant cellulose synthase-like F subfamily.

Its subcellular location is the golgi apparatus membrane. Functionally, may catalyze both beta-1,3 and beta-1,4 glycosidic linkage on beta-D-glucan. Essential for (1,3;1,4)-beta-D-glucans synthesis in grasses and cereals (Poaceae). The mixed-linked glucans (which are not present in walls of dicotyledons or most other monocotyledonous plants) are particularly important constituents of the walls of the starchy endosperm and aleurone cells of cereal grains such as oats, wheat, rice and barley. They can account for up to 70% by weight of the wall. The chain is Probable mixed-linked glucan synthase 3 (CSLF3) from Oryza sativa subsp. indica (Rice).